The primary structure comprises 745 residues: Eukaryotic translation initiation factor 3 subunit B (745 aa).

The 89-residue stretch at 41–129 (DVIVIEGVPV…HRFSVHRFTD (89 aa)) folds into the RRM domain. WD repeat units follow at residues 189–230 (EHSR…RFMR), 251–293 (WSHE…RSFP), 303–344 (GQLK…LLEK), and 580–625 (GEHY…LQKH). Residues 644 to 745 (GKDEQKRVRK…IIEETEEVLA (102 aa)) are a coiled coil.

Belongs to the eIF-3 subunit B family. Component of the eukaryotic translation initiation factor 3 (eIF-3) complex.

The protein resides in the cytoplasm. Its function is as follows. RNA-binding component of the eukaryotic translation initiation factor 3 (eIF-3) complex, which is involved in protein synthesis of a specialized repertoire of mRNAs and, together with other initiation factors, stimulates binding of mRNA and methionyl-tRNAi to the 40S ribosome. The eIF-3 complex specifically targets and initiates translation of a subset of mRNAs involved in cell proliferation. This chain is Eukaryotic translation initiation factor 3 subunit B, found in Mycosarcoma maydis (Corn smut fungus).